The primary structure comprises 185 residues: Sulfopyruvate decarboxylase subunit beta (185 aa).

It belongs to the TPP enzyme family. As to quaternary structure, heterododecamer composed of 6 subunits alpha and 6 subunits beta. Thiamine diphosphate is required as a cofactor.

It catalyses the reaction 3-sulfopyruvate + H(+) = sulfoacetaldehyde + CO2. Its pathway is cofactor biosynthesis; coenzyme M biosynthesis; sulfoacetaldehyde from phosphoenolpyruvate and sulfite: step 4/4. Involved in the biosynthesis of the coenzyme M (2-mercaptoethanesulfonic acid). Catalyzes the decarboxylation of sulfopyruvate to sulfoacetaldehyde. In Methanococcus maripaludis (strain DSM 14266 / JCM 13030 / NBRC 101832 / S2 / LL), this protein is Sulfopyruvate decarboxylase subunit beta.